Reading from the N-terminus, the 126-residue chain is Aspartate 1-decarboxylase (126 aa).

The active-site Schiff-base intermediate with substrate; via pyruvic acid is serine 25. Serine 25 is subject to Pyruvic acid (Ser). Threonine 57 is a binding site for substrate. Tyrosine 58 (proton donor) is an active-site residue. 73–75 (GAA) lines the substrate pocket.

The protein belongs to the PanD family. In terms of assembly, heterooctamer of four alpha and four beta subunits. The cofactor is pyruvate. Post-translationally, is synthesized initially as an inactive proenzyme, which is activated by self-cleavage at a specific serine bond to produce a beta-subunit with a hydroxyl group at its C-terminus and an alpha-subunit with a pyruvoyl group at its N-terminus.

The protein localises to the cytoplasm. The catalysed reaction is L-aspartate + H(+) = beta-alanine + CO2. The protein operates within cofactor biosynthesis; (R)-pantothenate biosynthesis; beta-alanine from L-aspartate: step 1/1. In terms of biological role, catalyzes the pyruvoyl-dependent decarboxylation of aspartate to produce beta-alanine. This is Aspartate 1-decarboxylase from Edwardsiella ictaluri (strain 93-146).